The chain runs to 171 residues: Ribosome maturation factor RimM (171 aa).

The PRC barrel domain maps to 96–170 (AEGEYYYHEI…LVTIHVMEGL (75 aa)).

This sequence belongs to the RimM family. In terms of assembly, binds ribosomal protein uS19.

It localises to the cytoplasm. Its function is as follows. An accessory protein needed during the final step in the assembly of 30S ribosomal subunit, possibly for assembly of the head region. Essential for efficient processing of 16S rRNA. May be needed both before and after RbfA during the maturation of 16S rRNA. It has affinity for free ribosomal 30S subunits but not for 70S ribosomes. The chain is Ribosome maturation factor RimM from Bacillus mycoides (strain KBAB4) (Bacillus weihenstephanensis).